The sequence spans 150 residues: Large ribosomal subunit protein bL9 (150 aa).

Belongs to the bacterial ribosomal protein bL9 family.

Its function is as follows. Binds to the 23S rRNA. The polypeptide is Large ribosomal subunit protein bL9 (Corynebacterium kroppenstedtii (strain DSM 44385 / JCM 11950 / CIP 105744 / CCUG 35717)).